The sequence spans 406 residues: MAAFEYKALDAKGRHKKGVIEGDNARQVRQRLKEQSLVPMEVVETQVKAARSRSQGFAFKRGISTPDLALITRQLATLVQSGMPLEECLRAVAEQSEKPRIRTMLVAVRAKVTEGYTLSDSLGDYPHVFDELFRSMVAAGEKSGHLDSVLERLADYAENRQKMRSKLQQAMIYPVVLVVFAVGIVAFLLAAVVPKIVGQFVQMGQALPASTQFLLDASDFLQHWGISLLVGLLMLIYLVRWLLTKPDIRLRWDRRVISLPVIGKIARGLNTARFARTLSICTSSAIPILDGMRVAVDVMTNQFVKQQVLAAAENVREGSSLRKALEQTKLFPPMMLHMIASGEQSGELEGMLTRAADNQDNSFESTVNIALGIFTPALIALMAGMVLFIVMATLMPILEMNNLMSR.

Topologically, residues 1 to 171 (MAAFEYKALD…KMRSKLQQAM (171 aa)) are cytoplasmic. Glu97, Glu151, and Asp155 together coordinate Ca(2+). A helical membrane pass occupies residues 172 to 192 (IYPVVLVVFAVGIVAFLLAAV). Topologically, residues 193-223 (VPKIVGQFVQMGQALPASTQFLLDASDFLQH) are periplasmic. The helical transmembrane segment at 224–244 (WGISLLVGLLMLIYLVRWLLT) threads the bilayer. The Cytoplasmic segment spans residues 245–368 (KPDIRLRWDR…QDNSFESTVN (124 aa)). A helical membrane pass occupies residues 369–389 (IALGIFTPALIALMAGMVLFI). At 390 to 406 (VMATLMPILEMNNLMSR) the chain is on the periplasmic side.

Belongs to the GSP F family. As to quaternary structure, type II secretion system is composed of four main components: the outer membrane complex, the inner membrane complex, the cytoplasmic secretion ATPase and the periplasm-spanning pseudopilus. Homodimer. Interacts with EpsE/GspE and EpsL/GspL components.

It is found in the cell inner membrane. Functionally, component of the type II secretion system inner membrane complex required for the energy-dependent secretion of extracellular factors such as proteases and toxins from the periplasm. In Vibrio cholerae serotype O1 (strain ATCC 39315 / El Tor Inaba N16961), this protein is Type II secretion system protein F (epsF).